We begin with the raw amino-acid sequence, 303 residues long: MADLSVNIGDLKLCNPVMTASGTFGYGKEFEDFVDLEKIGGIIVKGTTLHHREGNPYPRMAETPMGMLNAVGLQNKGVDYFVEHIYPQIRDIHTNMIVNVSGSAVEDYVKTAEIINDLDHIPAIELNISCPNVKQGGMAFGVSACGCSEVVKAVRNVYKKTLIVKLSPNVTDITEIARAAEASGADSVSLINTLLGMAVDAEKRRPVLSTITGGMSGAAVKPIALRMVWQVAKAVNIPVIGLGGIMGWKDAVEFMLAGATAIQIGTANFIDPAITVKVSEGINDYLERHGYTSVKDIIGALEV.

FMN contacts are provided by residues S21 and 45-46 (KG). Residues K45 and 69 to 73 (NAVGL) contribute to the substrate site. Residues N99 and N127 each contribute to the FMN site. Position 127 (N127) interacts with substrate. C130 functions as the Nucleophile in the catalytic mechanism. Positions 165 and 191 each coordinate FMN. 192 to 193 (NT) contributes to the substrate binding site. Residues G217, 243–244 (GG), and 265–266 (GT) contribute to the FMN site.

Belongs to the dihydroorotate dehydrogenase family. Type 1 subfamily. In terms of assembly, heterotetramer of 2 PyrK and 2 PyrD type B subunits. The cofactor is FMN.

The protein localises to the cytoplasm. It catalyses the reaction (S)-dihydroorotate + NAD(+) = orotate + NADH + H(+). It functions in the pathway pyrimidine metabolism; UMP biosynthesis via de novo pathway; orotate from (S)-dihydroorotate (NAD(+) route): step 1/1. Catalyzes the conversion of dihydroorotate to orotate with NAD(+) as electron acceptor. The chain is Dihydroorotate dehydrogenase B (NAD(+)), catalytic subunit (pyrD) from Phocaeicola vulgatus (strain ATCC 8482 / DSM 1447 / JCM 5826 / CCUG 4940 / NBRC 14291 / NCTC 11154) (Bacteroides vulgatus).